A 302-amino-acid chain; its full sequence is Sulfate adenylyltransferase subunit 2 (302 aa).

The protein belongs to the PAPS reductase family. CysD subfamily. As to quaternary structure, heterodimer composed of CysD, the smaller subunit, and CysN.

The catalysed reaction is sulfate + ATP + H(+) = adenosine 5'-phosphosulfate + diphosphate. Its pathway is sulfur metabolism; hydrogen sulfide biosynthesis; sulfite from sulfate: step 1/3. Its function is as follows. With CysN forms the ATP sulfurylase (ATPS) that catalyzes the adenylation of sulfate producing adenosine 5'-phosphosulfate (APS) and diphosphate, the first enzymatic step in sulfur assimilation pathway. APS synthesis involves the formation of a high-energy phosphoric-sulfuric acid anhydride bond driven by GTP hydrolysis by CysN coupled to ATP hydrolysis by CysD. The protein is Sulfate adenylyltransferase subunit 2 of Salmonella paratyphi A (strain AKU_12601).